The sequence spans 430 residues: CinA-like protein (430 aa).

It belongs to the CinA family.

This is CinA-like protein from Prochlorococcus marinus (strain NATL1A).